The following is a 118-amino-acid chain: ATP synthase subunit g, mitochondrial (118 aa).

As to quaternary structure, F-type ATP synthases have 2 components, the catalytic core F(1) and the membrane-embedded component F(0), linked together by a central stalk and a peripheral stalk. The central stalk, also called rotor shaft, is often seen as part of F(1). The peripheral stalk is seen as part of F(0). F(0) contains the membrane channel next to the rotor. F-type ATP synthases form dimers but each monomer functions independently in ATP generation. The dimer consists of 18 different polypeptides: ATP1 (subunit alpha, part of F(1), 3 molecules per monomer), ATP2 (subunit beta, part of F(1), 3 molecules per monomer), ATP3 (subunit gamma, part of the central stalk), ATP4 (subunit b, part of the peripheral stalk), ATP5/OSCP (subunit 5/OSCP, part of the peripheral stalk), ATP6 (subunit a, part of the peripheral stalk), ATP7 (subunit d, part of the peripheral stalk), ATP8 (subunit 8, part of the peripheral stalk), OLI1 (subunit c, part of the rotor, 10 molecules per monomer), ATP14 (subunit h, part of the peripheral stalk), ATP15 (subunit epsilon, part of the central stalk), ATP16 (subunit delta, part of the central stalk), ATP17 (subunit f, part of the peripheral stalk), ATP18 (subunit i/j, part of the peripheral stalk). Dimer-specific subunits are ATP19 (subunit k, at interface between monomers), ATP20 (subunit g, at interface between monomers), TIM11 (subunit e, at interface between monomers). Also contains subunit L.

It localises to the mitochondrion inner membrane. Mitochondrial membrane ATP synthase (F(1)F(0) ATP synthase or Complex V) produces ATP from ADP in the presence of a proton gradient across the membrane which is generated by electron transport complexes of the respiratory chain. F-type ATP synthases consist of two structural domains, F(1) - containing the extramembraneous catalytic core, and F(0) - containing the membrane proton channel, linked together by a central stalk and a peripheral stalk. During catalysis, ATP synthesis in the catalytic domain of F(1) is coupled via a rotary mechanism of the central stalk subunits to proton translocation. Part of the complex F(0) domain Minor subunit located with subunit a/ATP6 in the membrane. Together with subunit e/TIM11, probably contributes to membrane curvature at the site of the ATP synthase dimer, ultimately contributing to formation of cristae. This Pichia angusta (Yeast) protein is ATP synthase subunit g, mitochondrial.